Consider the following 38-residue polypeptide: Large ribosomal subunit protein bL36 (38 aa).

Belongs to the bacterial ribosomal protein bL36 family.

The sequence is that of Large ribosomal subunit protein bL36 from Phytoplasma australiense.